We begin with the raw amino-acid sequence, 32 residues long: Conotoxin Cltx-4 (32 aa).

Residues Pro2, Pro24, Pro28, and Pro30 each carry the 4-hydroxyproline modification. Ser32 is modified (serine amide).

Post-translationally, contains 4 disulfide bonds. In terms of tissue distribution, expressed by the venom duct.

It localises to the secreted. The sequence is that of Conotoxin Cltx-4 from Californiconus californicus (California cone).